Reading from the N-terminus, the 361-residue chain is Chorismate synthase (361 aa).

Arginine 48 and arginine 54 together coordinate NADP(+). FMN contacts are provided by residues 125–127 (RSS), 238–239 (NA), glycine 278, 293–297 (KPTSS), and arginine 319.

It belongs to the chorismate synthase family. As to quaternary structure, homotetramer. FMNH2 serves as cofactor.

It carries out the reaction 5-O-(1-carboxyvinyl)-3-phosphoshikimate = chorismate + phosphate. The protein operates within metabolic intermediate biosynthesis; chorismate biosynthesis; chorismate from D-erythrose 4-phosphate and phosphoenolpyruvate: step 7/7. Functionally, catalyzes the anti-1,4-elimination of the C-3 phosphate and the C-6 proR hydrogen from 5-enolpyruvylshikimate-3-phosphate (EPSP) to yield chorismate, which is the branch point compound that serves as the starting substrate for the three terminal pathways of aromatic amino acid biosynthesis. This reaction introduces a second double bond into the aromatic ring system. The polypeptide is Chorismate synthase (Salmonella typhi).